Reading from the N-terminus, the 242-residue chain is Probable transcriptional regulatory protein Bmul_0984/BMULJ_02280 (242 aa).

It belongs to the TACO1 family.

It is found in the cytoplasm. The sequence is that of Probable transcriptional regulatory protein Bmul_0984/BMULJ_02280 from Burkholderia multivorans (strain ATCC 17616 / 249).